Consider the following 228-residue polypeptide: Ankyrin repeat domain-containing protein 46 (228 aa).

ANK repeat units lie at residues 11–40, 44–73, 77–103, and 107–138; these read QTNV…DPNI, RGRT…DLLA, QGNT…KIDI, and QGAT…EVKG. Residues 195-215 form a helical membrane-spanning segment; that stretch reads VLLLIFVIALLSLGIAYYVSG.

It localises to the membrane. In Pongo abelii (Sumatran orangutan), this protein is Ankyrin repeat domain-containing protein 46 (ANKRD46).